The primary structure comprises 97 residues: MAAKKTVTKADLVDQVAQATGLKKKDVKAMVDALLAKVEEALANGSKVQLTGFGTFEVRKRKARTGVKPGTKEKIKIPATQYPAFKPGKALKDKVKK.

The protein belongs to the bacterial histone-like protein family. As to quaternary structure, has been isolated in complexes with 5S rRNA and bL25, and with 5S rRNA, bL25 and uL5. Homodimer.

In terms of biological role, histone-like DNA-binding protein which is capable of wrapping DNA to stabilize it, and thus to prevent its denaturation under extreme environmental conditions. The sequence is that of DNA-binding protein HU from Thermus thermophilus (strain ATCC 27634 / DSM 579 / HB8).